Here is a 334-residue protein sequence, read N- to C-terminus: MKNLHSLFLASAFLAGFCGSSLAGEREGVVVSIKPLHSIVSAVMQGVGKPKLIVQGAGSEHVYSLKPSDAEAIEHAKVIFWAGPSMETFLDKPIDTLGEGAKVVALGDAKGLTKLKFREGGPFEAHDHGHGGSHEEEHDAHGSGDHDHAAEVAEEGHEHHHHGEYDLHFWLDPQNGKILAADIAKTLGESDPEHAAQYEKNAKAYGEKLDALTREVAAELKPVKDKPFIVFHDAYQYFENRFGMKAAGSITVSPEKAPGAARIQQIHDKIKSLGATCVFSEPQFEPKLVKTVVDGTKARTGVLDPLGAELKDGPDLYPQLIRNLANSLKDCLPK.

The signal sequence occupies residues 1–23 (MKNLHSLFLASAFLAGFCGSSLA). 2 residues coordinate Zn(2+): Glu60 and His61. The tract at residues 120-147 (GGPFEAHDHGHGGSHEEEHDAHGSGDHD) is disordered. Residues His168 and His232 each coordinate Zn(2+). The cysteines at positions 277 and 331 are disulfide-linked.

The protein belongs to the bacterial solute-binding protein 9 family.

It localises to the periplasm. In terms of biological role, part of the ATP-binding cassette (ABC) transport system ZnuABC involved in zinc import. Binds zinc with high affinity and specificity and delivers it to the membrane permease for translocation into the cytoplasm. Required for survival and normal growth under low Zn (2+) concentrations. Also required for virulence and intracellular growth in macrophages. This chain is High-affinity zinc uptake system protein ZnuA (znuA), found in Brucella abortus (strain 2308).